The sequence spans 323 residues: Sphingolipid delta(4)-desaturase/C4-monooxygenase DES2 (323 aa).

Glycine 2 carries the N-myristoyl glycine lipid modification. 2 helical membrane-spanning segments follow: residues proline 41–valine 61 and tryptophan 68–isoleucine 88. Positions histidine 89 to histidine 93 match the Histidine box-1 motif. A required for C4-hydroxylase activity region spans residues threonine 95–threonine 99. The Histidine box-2 motif lies at histidine 128 to histidine 132. Residues isoleucine 200 to leucine 220 traverse the membrane as a helical segment. The Histidine box-3 motif lies at histidine 259–histidine 263.

It belongs to the fatty acid desaturase type 1 family. DEGS subfamily.

It is found in the endoplasmic reticulum membrane. It catalyses the reaction a dihydroceramide + 2 Fe(II)-[cytochrome b5] + O2 + 2 H(+) = a phytoceramide + 2 Fe(III)-[cytochrome b5] + H2O. The enzyme catalyses an N-acylsphinganine + 2 Fe(II)-[cytochrome b5] + O2 + 2 H(+) = an N-acylsphing-4-enine + 2 Fe(III)-[cytochrome b5] + 2 H2O. It carries out the reaction N-octanoylsphinganine + 2 Fe(II)-[cytochrome b5] + O2 + 2 H(+) = N-octanoyl-4-hydroxysphinganine + 2 Fe(III)-[cytochrome b5] + H2O. The catalysed reaction is an N-acylsphinganine + 2 Fe(II)-[cytochrome b5] + O2 + 2 H(+) = an N-acyl-(4R)-4-hydroxysphinganine + 2 Fe(III)-[cytochrome b5] + H2O. Its pathway is membrane lipid metabolism; sphingolipid biosynthesis. Its function is as follows. Bifunctional enzyme which acts both as a sphingolipid delta(4)-desaturase and a sphingolipid C4-monooxygenase. This Rattus norvegicus (Rat) protein is Sphingolipid delta(4)-desaturase/C4-monooxygenase DES2.